We begin with the raw amino-acid sequence, 426 residues long: Enolase 1 (426 aa).

Q162 contributes to the (2R)-2-phosphoglycerate binding site. Catalysis depends on E204, which acts as the Proton donor. D241, E284, and D311 together coordinate Mg(2+). The (2R)-2-phosphoglycerate site is built by K336, R365, S366, and K387. K336 serves as the catalytic Proton acceptor.

It belongs to the enolase family. Mg(2+) is required as a cofactor.

Its subcellular location is the cytoplasm. The protein localises to the secreted. It localises to the cell surface. It carries out the reaction (2R)-2-phosphoglycerate = phosphoenolpyruvate + H2O. It functions in the pathway carbohydrate degradation; glycolysis; pyruvate from D-glyceraldehyde 3-phosphate: step 4/5. Catalyzes the reversible conversion of 2-phosphoglycerate (2-PG) into phosphoenolpyruvate (PEP). It is essential for the degradation of carbohydrates via glycolysis. This Methanospirillum hungatei JF-1 (strain ATCC 27890 / DSM 864 / NBRC 100397 / JF-1) protein is Enolase 1.